The primary structure comprises 132 residues: Small ribosomal subunit protein uS13 (132 aa).

Over residues 101 to 125 (RGLPVRGQRTKTNARTRKGPRKTVA) the composition is skewed to basic residues. The disordered stretch occupies residues 101-132 (RGLPVRGQRTKTNARTRKGPRKTVANKKIETR).

The protein belongs to the universal ribosomal protein uS13 family. Part of the 30S ribosomal subunit. Forms a loose heterodimer with protein S19. Forms two bridges to the 50S subunit in the 70S ribosome.

Functionally, located at the top of the head of the 30S subunit, it contacts several helices of the 16S rRNA. In the 70S ribosome it contacts the 23S rRNA (bridge B1a) and protein L5 of the 50S subunit (bridge B1b), connecting the 2 subunits; these bridges are implicated in subunit movement. Contacts the tRNAs in the A and P-sites. The protein is Small ribosomal subunit protein uS13 of Ureaplasma parvum serovar 3 (strain ATCC 27815 / 27 / NCTC 11736).